Reading from the N-terminus, the 229-residue chain is MIDHQHLRLFQFCDSQFPTGAFSHSFGLETYIQRETVHDTETFIKWLHLFINEQLTYSDGIAMRIVYHALINNDKDKILDINQKLFVQNLPKETRIGAKQMGTRMVKLALDLYDSEWIQWYYNQMKNNKIKLHPAVCFTMLGHFLGVDVESIIDYYLYQNISSLTQNAVRAIPLGQTAGQQVVTEMIAHIEKTRNHILELDEIDFGMTAPGLELNQMEHENVHVRIFIS.

Belongs to the UreF family. As to quaternary structure, ureD, UreF and UreG form a complex that acts as a GTP-hydrolysis-dependent molecular chaperone, activating the urease apoprotein by helping to assemble the nickel containing metallocenter of UreC. The UreE protein probably delivers the nickel.

The protein localises to the cytoplasm. In terms of biological role, required for maturation of urease via the functional incorporation of the urease nickel metallocenter. In Staphylococcus epidermidis (strain ATCC 12228 / FDA PCI 1200), this protein is Urease accessory protein UreF.